The primary structure comprises 364 residues: Inactive protein RESTRICTED TEV MOVEMENT 2 (364 aa).

Residues 14-121 (VQYEDFVPKS…LPETSRTEAA (108 aa)) enclose the sHSP domain. One copy of the A-1 repeat lies at 129–133 (LEEKR). Residues 129 to 220 (LEEKRLLEES…LEERRLEERK (92 aa)) are 6 X 5 AA repeats A of L-E-E-[SKR]-[ERK]. One copy of the A-2 repeat lies at 135 to 139 (LEESR). The stretch at 156 to 160 (LEEKE) is one A-3 repeat. A B-1 repeat occupies 163 to 176 (IRKLQEEAKAKEEA). The segment at 163 to 206 (IRKLQEEAKAKEEAEMRKLQEEAKAKEEAAAKKLQEEIEAKEKL) is 3 X 14 AA repeats B of [IMA]-[RK]-K-L-Q-E-E-A-K-A-K-E-[EK]-[LA]. Residues 178 to 191 (MRKLQEEAKAKEEA) form a B-2 repeat. Residues 193-205 (AKKLQEEIEAKEK) form a B-3 repeat. The stretch at 206-210 (LEERK) is one A-4 repeat. The stretch at 211–215 (LEERR) is one A-5 repeat. An A-6 repeat occupies 216–220 (LEERK). The chain crosses the membrane as a helical span at residues 322-342 (LMMNVGVAALVIFALGAYVSY). The disordered stretch occupies residues 345–364 (CSSSSSSSSPSSSSSSTKPE). Residues 346–364 (SSSSSSSSPSSSSSSTKPE) are compositionally biased toward low complexity.

The protein belongs to the small heat shock protein (HSP20) family.

The protein resides in the cell membrane. In terms of biological role, seems to not be involved in heat resistance. Unable to mediate restriction of long-distance movement of the pathogenic tobacco etch virus (TEV) without causing a hypersensitive response or inducing systemic acquired resistance. The chain is Inactive protein RESTRICTED TEV MOVEMENT 2 (RTM2) from Arabidopsis thaliana (Mouse-ear cress).